The chain runs to 565 residues: Arginine--tRNA ligase (565 aa).

The 'HIGH' region motif lies at 128-138 (ANPTGPLHVGH).

It belongs to the class-I aminoacyl-tRNA synthetase family. In terms of assembly, monomer.

The protein resides in the cytoplasm. The catalysed reaction is tRNA(Arg) + L-arginine + ATP = L-arginyl-tRNA(Arg) + AMP + diphosphate. The protein is Arginine--tRNA ligase of Albidiferax ferrireducens (strain ATCC BAA-621 / DSM 15236 / T118) (Rhodoferax ferrireducens).